Consider the following 202-residue polypeptide: Small ribosomal subunit protein uS4 (202 aa).

Residues 15–42 (LGDLPGLTRKAAKRSYPPGQHGQARRKR) are disordered. The S4 RNA-binding domain occupies 90 to 152 (SRLDNICFRL…KGSKQLAEGN (63 aa)).

It belongs to the universal ribosomal protein uS4 family. As to quaternary structure, part of the 30S ribosomal subunit. Contacts protein S5. The interaction surface between S4 and S5 is involved in control of translational fidelity.

One of the primary rRNA binding proteins, it binds directly to 16S rRNA where it nucleates assembly of the body of the 30S subunit. Functionally, with S5 and S12 plays an important role in translational accuracy. The protein is Small ribosomal subunit protein uS4 of Synechococcus sp. (strain CC9902).